The sequence spans 303 residues: D-alanyl-D-alanine carboxypeptidase (303 aa).

A helical transmembrane segment spans residues leucine 7–glutamate 23. Positions aspartate 37–lysine 56 are disordered. Substrate contacts are provided by residues tyrosine 154–leucine 156 and serine 161. Histidine 163 and aspartate 170 together coordinate Zn(2+). Glutamate 213 serves as the catalytic Proton donor/acceptor. Residue histidine 216 participates in Zn(2+) binding.

This sequence belongs to the peptidase M15B family. Requires Zn(2+) as cofactor.

It localises to the cell membrane. Its activity is regulated as follows. The DD-carboxypeptidase activity is not inhibited by beta-lactam antibiotics. Cleaves the C-terminal D-alanine residue of UDP-muramyl-pentapeptide (UDP-MurNAc-L-Ala-D-Glu-mDAP-D-Ala-D-Ala) or diacetyl-L-Lys-D-Ala-D-Ala. However the physiological substrate likely contains L-Lys instead of mDAP at the third position of the pentapeptide. Also releases the C-terminal D-lactate from UDP-MurNAc-L-Ala-D-Glu-mDAP-D-Ala-D-lactate, a depsipeptide produced by the vancomycin resistance protein VanA. Therefore, VanY should contribute in vivo to the hydrolysis of both the D-alanyl-D-alanine- and the depsipeptide-containing peptidoglycan precursors. Is not necessary for vancomycin resistance of E.faecium BM4147 and perhaps not W14-9. Does not display transpeptidase or beta-lactamase activities. The protein is D-alanyl-D-alanine carboxypeptidase of Enterococcus faecium (Streptococcus faecium).